We begin with the raw amino-acid sequence, 100 residues long: Large ribosomal subunit protein bL27 (100 aa).

Residues 1–9 constitute a propeptide that is removed on maturation; that stretch reads MLKMNLQLF.

Belongs to the bacterial ribosomal protein bL27 family. Post-translationally, the N-terminus is cleaved by ribosomal processing cysteine protease Prp.

The protein is Large ribosomal subunit protein bL27 of Clostridium perfringens (strain ATCC 13124 / DSM 756 / JCM 1290 / NCIMB 6125 / NCTC 8237 / Type A).